Here is a 380-residue protein sequence, read N- to C-terminus: Ceramide synthase 2 (380 aa).

The Lumenal portion of the chain corresponds to 1-40 (MLQTLYDYFWWERLWLPVNLTWADLEDKDGRVYAKASDLY). The N-linked (GlcNAc...) asparagine glycan is linked to Asn-19. A helical membrane pass occupies residues 41 to 61 (ITLPLALLFLVIRYFFELYVA). The interval 67–128 (LLNVKEKTRL…RRRRNQDRPS (62 aa)) is homeobox-like. Residues 131–332 (KKFREASWRF…ILRMAHKFIT (202 aa)) enclose the TLC domain. A run of 4 helical transmembrane segments spans residues 140-160 (FTYYLIAFVAGMAVTVDKPWF), 175-195 (IIPSQYWYYMIELSFYWSLLF), 209-229 (QIIHHVATIILLCFSWFANYV), and 264-284 (LFIVFAIVFIITRLVIMPFWI). The Last loop motif motif lies at 291–300 (YPLELYPAFF). The chain crosses the membrane as a helical span at residues 304 to 324 (FFNFMMAVLQMLHIFWAYFIL). The Cytoplasmic portion of the chain corresponds to 325–380 (RMAHKFITGKLIEDERSDREETESSEGEETAAGAGAKSRLLANGHPILNNNHPKND). Residues 340–380 (RSDREETESSEGEETAAGAGAKSRLLANGHPILNNNHPKND) are disordered. The residue at position 341 (Ser-341) is a Phosphoserine. Residues 344–353 (EETESSEGEE) show a composition bias toward acidic residues. A Phosphothreonine modification is found at Thr-346. A phosphoserine mark is found at Ser-348 and Ser-349.

As to quaternary structure, interacts with ATP6V0C, ASGR1, ASGR2 and SLC22A1/OCT1. Interacts with ELOV1, HSD17B12 and TECR. Interacts with NDUFS2. Interacts with PAQR4; the interaction regulates the stability and activity of CERS2 and is inhibited in presence of ceramides. In terms of processing, acetylated. Deacetylation by SIRT3 increases enzyme activity and promotes mitochondrial ceramide accumulation. Post-translationally, phosphorylated at the C-terminus by CK2, leading to increase the ceramide synthase activity. As to expression, broadly expressed, with highest levels in liver and kidney. In brain is detected in neurons, oligodentrocytes, ependymal cells and epithelial cells of the choroid plexus. In kidney is detected in collecting ducts and to a lesser degree in proximal tubules.

It is found in the endoplasmic reticulum membrane. It catalyses the reaction a very long-chain fatty acyl-CoA + a sphingoid base = an N-(very-long-chain fatty acyl)-sphingoid base + CoA + H(+). The catalysed reaction is docosanoyl-CoA + sphinganine = N-docosanoylsphinganine + CoA + H(+). It carries out the reaction tetracosanoyl-CoA + sphinganine = N-tetracosanoylsphinganine + CoA + H(+). The enzyme catalyses hexacosanoyl-CoA + sphinganine = N-hexacosanoylsphinganine + CoA + H(+). It catalyses the reaction (15Z)-tetracosenoyl-CoA + sphinganine = N-(15Z-tetracosenoyl)-sphinganine + CoA + H(+). The catalysed reaction is 2-hydroxytetracosanoyl-CoA + sphinganine = N-(2-hydroxytetracosanoyl)-sphinganine + CoA + H(+). It carries out the reaction 2-hydroxydocosanoyl-CoA + sphinganine = N-(2-hydroxydocosanoyl)-sphinganine + CoA + H(+). The enzyme catalyses 2-hydroxytetracosenoyl-CoA + sphinganine = N-(2-hydroxytetracosenoyl)-sphinganine + CoA + H(+). It catalyses the reaction tetracosenoyl-CoA + sphinganine = an N-tetracosenoylsphinganine + CoA + H(+). The catalysed reaction is hexacosenoyl-CoA + sphinganine = N-hexacosenoylsphinganine + CoA + H(+). It carries out the reaction tetracosanoyl-CoA + sphing-4-enine = N-tetracosanoyl-sphing-4-enine + CoA + H(+). The enzyme catalyses tetracosenoyl-CoA + sphing-4-enine = N-(tetracosenoyl)-sphing-4-enine + CoA + H(+). It catalyses the reaction heptadecasphing-4-enine + tetracosanoyl-CoA = N-tetracosanoyl-heptadecasphing-4-enine + CoA + H(+). The catalysed reaction is a fatty acyl-CoA + sphing-4-enine = an N-acylsphing-4-enine + CoA + H(+). It carries out the reaction sphing-4-enine + hexadecanoyl-CoA = N-hexadecanoylsphing-4-enine + CoA + H(+). The enzyme catalyses sphing-4-enine + octadecanoyl-CoA = N-octadecanoylsphing-4-enine + CoA + H(+). It catalyses the reaction eicosanoyl-CoA + sphing-4-enine = N-eicosanoyl-sphing-4-enine + CoA + H(+). The catalysed reaction is sphinganine + hexadecanoyl-CoA = N-hexadecanoylsphinganine + CoA + H(+). It carries out the reaction sphinganine + octadecanoyl-CoA = N-(octadecanoyl)-sphinganine + CoA + H(+). The enzyme catalyses sphinganine + (9Z)-octadecenoyl-CoA = N-(9Z-octadecenoyl)-sphinganine + CoA + H(+). It catalyses the reaction eicosanoyl-CoA + sphinganine = N-eicosanoylsphinganine + CoA + H(+). It participates in lipid metabolism; sphingolipid metabolism. Its activity is regulated as follows. Ceramide synthase activity is inhibited by sphingosine-1-phosphate. Its function is as follows. Ceramide synthase that catalyzes the transfer of the acyl chain from acyl-CoA to a sphingoid base, with high selectivity toward very-long-chain fatty acyl-CoA (chain length C22-C27). N-acylates sphinganine and sphingosine bases to form dihydroceramides and ceramides in de novo synthesis and salvage pathways, respectively. Plays a non-redundant role in the synthesis of ceramides with very-long-chain fatty acids in kidney, liver and brain. Regulates the abundance of myelin-specific sphingolipids galactosylceramide and sulfatide that affects myelin sheath architecture and motor neuron functions. The sequence is that of Ceramide synthase 2 from Mus musculus (Mouse).